Consider the following 561-residue polypeptide: 4-coumarate--CoA ligase 1 (561 aa).

Serine 210, serine 211, glycine 212, threonine 213, threonine 214, and lysine 218 together coordinate ATP. (E)-4-coumaroyl-AMP contacts are provided by tyrosine 260 and serine 264. A CoA-binding site is contributed by lysine 281. Positions 283 to 352 (EINLLLELIQ…AKFPNAKLGQ (70 aa)) are SBD1. 5 residues coordinate (E)-4-coumaroyl-AMP: alanine 330, glutamine 352, glycine 353, threonine 357, and methionine 365. ATP-binding residues include glutamine 352, glycine 353, and threonine 357. The tract at residues 353–420 (GYGMTEAGPV…IRGHQIMKGY (68 aa)) is SBD2. ATP contacts are provided by aspartate 441 and arginine 456. (E)-4-coumaroyl-AMP is bound by residues lysine 458 and lysine 462. The CoA site is built by lysine 464 and glycine 465. Residue lysine 547 participates in ATP binding.

The protein belongs to the ATP-dependent AMP-binding enzyme family. It depends on Mg(2+) as a cofactor. Preferentially expressed in roots, bolting stems and siliques. Also detected in leaves.

It carries out the reaction (E)-4-coumarate + ATP + CoA = (E)-4-coumaroyl-CoA + AMP + diphosphate. The enzyme catalyses (E)-caffeate + ATP + CoA = (E)-caffeoyl-CoA + AMP + diphosphate. It catalyses the reaction (E)-ferulate + ATP + CoA = (E)-feruloyl-CoA + AMP + diphosphate. The catalysed reaction is (E)-4-coumarate + ATP + H(+) = (E)-4-coumaroyl-AMP + diphosphate. It carries out the reaction (E)-4-coumaroyl-AMP + CoA = (E)-4-coumaroyl-CoA + AMP + H(+). The enzyme catalyses (E)-caffeate + ATP + H(+) = (E)-caffeoyl-AMP + diphosphate. It catalyses the reaction (E)-caffeoyl-AMP + CoA = (E)-caffeoyl-CoA + AMP + H(+). The catalysed reaction is (E)-ferulate + ATP + H(+) = (E)-feruloyl-AMP + diphosphate. It carries out the reaction (E)-feruloyl-AMP + CoA = (E)-feruloyl-CoA + AMP + H(+). The protein operates within phytoalexin biosynthesis; 3,4',5-trihydroxystilbene biosynthesis; 3,4',5-trihydroxystilbene from trans-4-coumarate: step 1/2. In terms of biological role, produces CoA thioesters of a variety of hydroxy- and methoxy-substituted cinnamic acids, which are used to synthesize several phenylpropanoid-derived compounds, including anthocyanins, flavonoids, isoflavonoids, coumarins, lignin, suberin and wall-bound phenolics. Follows a two-step reaction mechanism, wherein the carboxylate substrate first undergoes adenylation by ATP, followed by a thioesterification in the presence of CoA to yield the final CoA thioesters. The sequence is that of 4-coumarate--CoA ligase 1 from Arabidopsis thaliana (Mouse-ear cress).